Consider the following 1203-residue polypeptide: DNA-directed RNA polymerase subunit beta (1203 aa).

The span at 1174–1195 shows a compositional bias: basic and acidic residues; it reads AAQEAKAAFEAEEAEKATKAEA. A disordered region spans residues 1174–1203; that stretch reads AAQEAKAAFEAEEAEKATKAEATEEAAEQE.

This sequence belongs to the RNA polymerase beta chain family. The RNAP catalytic core consists of 2 alpha, 1 beta, 1 beta' and 1 omega subunit. When a sigma factor is associated with the core the holoenzyme is formed, which can initiate transcription.

It carries out the reaction RNA(n) + a ribonucleoside 5'-triphosphate = RNA(n+1) + diphosphate. In terms of biological role, DNA-dependent RNA polymerase catalyzes the transcription of DNA into RNA using the four ribonucleoside triphosphates as substrates. The chain is DNA-directed RNA polymerase subunit beta from Streptococcus pneumoniae (strain ATCC 700669 / Spain 23F-1).